Here is a 141-residue protein sequence, read N- to C-terminus: MYKHILVAVDLSEESLILLRKGAGLAEKCGAKLSLIHVDVNFSDLYTGLIDINMSSVQDGVIEETTKALDELALKIDYPVSQRLNGTGDFSQVLEEAVAKYQIDLLITGHHQDFWSKFMSSTRQVMNNVTVDMLVVPLIDE.

It belongs to the universal stress protein A family. Homodimer.

Its subcellular location is the cytoplasm. Its function is as follows. Required for resistance to DNA-damaging agents. This chain is Universal stress protein A homolog (uspA), found in Haemophilus ducreyi (strain 35000HP / ATCC 700724).